The following is a 492-amino-acid chain: Cytochrome P450 2A12 (492 aa).

Cysteine 437 contributes to the heme binding site.

Belongs to the cytochrome P450 family. Heme serves as cofactor. As to expression, liver.

It localises to the endoplasmic reticulum membrane. The protein localises to the microsome membrane. The enzyme catalyses an organic molecule + reduced [NADPH--hemoprotein reductase] + O2 = an alcohol + oxidized [NADPH--hemoprotein reductase] + H2O + H(+). Highly active in the 7-alpha-hydroxylation of testosterone. In Mus musculus (Mouse), this protein is Cytochrome P450 2A12 (Cyp2a12).